We begin with the raw amino-acid sequence, 543 residues long: Chaperonin GroEL (543 aa).

Residues 29-32, 86-90, Gly413, 477-479, and Asp493 contribute to the ATP site; these read TLGP, DGTTT, and DAL. A disordered region spans residues 524-543; it reads EKDKPEMPGGAPGMGMGGMY. Over residues 533 to 543 the composition is skewed to gly residues; sequence GAPGMGMGGMY.

The protein belongs to the chaperonin (HSP60) family. In terms of assembly, forms a cylinder of 14 subunits composed of two heptameric rings stacked back-to-back. Interacts with the co-chaperonin GroES.

It is found in the cytoplasm. The catalysed reaction is ATP + H2O + a folded polypeptide = ADP + phosphate + an unfolded polypeptide.. In terms of biological role, together with its co-chaperonin GroES, plays an essential role in assisting protein folding. The GroEL-GroES system forms a nano-cage that allows encapsulation of the non-native substrate proteins and provides a physical environment optimized to promote and accelerate protein folding. The protein is Chaperonin GroEL of Clostridium acetobutylicum (strain ATCC 824 / DSM 792 / JCM 1419 / IAM 19013 / LMG 5710 / NBRC 13948 / NRRL B-527 / VKM B-1787 / 2291 / W).